Consider the following 247-residue polypeptide: Probable dihydroorotate dehydrogenase B (NAD(+)), electron transfer subunit (247 aa).

An FAD-binding FR-type domain is found at 1-87 (MLRRVTLKET…RGPYGNGFKE (87 aa)). Residues Cys200, Cys205, Cys208, and Cys216 each coordinate [2Fe-2S] cluster.

Belongs to the PyrK family. Heterotetramer of 2 PyrK and 2 PyrD type B subunits. The cofactor is [2Fe-2S] cluster. FAD is required as a cofactor.

It participates in pyrimidine metabolism; UMP biosynthesis via de novo pathway; orotate from (S)-dihydroorotate (NAD(+) route): step 1/1. Functionally, responsible for channeling the electrons from the oxidation of dihydroorotate from the FMN redox center in the PyrD type B subunit to the ultimate electron acceptor NAD(+). In Pyrococcus horikoshii (strain ATCC 700860 / DSM 12428 / JCM 9974 / NBRC 100139 / OT-3), this protein is Probable dihydroorotate dehydrogenase B (NAD(+)), electron transfer subunit.